Consider the following 501-residue polypeptide: DDB1- and CUL4-associated factor 12-like protein 1 (501 aa).

Residues 1 to 37 (MRQADSQTQPSPAEQETPQPAGPSNRSPPTMGPQQTG) show a composition bias toward polar residues. Positions 1 to 67 (MRQADSQTQP…PAAPMATAGE (67 aa)) are disordered. 4 WD repeats span residues 185–225 (PPSC…PVCL), 230–268 (GHRD…FNGS), 298–337 (PGNR…SRLL), and 384–423 (SREG…FLEE).

This sequence belongs to the WD repeat DCAF12 family.

The sequence is that of DDB1- and CUL4-associated factor 12-like protein 1 (Dcaf12l1) from Mus musculus (Mouse).